A 179-amino-acid chain; its full sequence is ATP synthase subunit b (179 aa).

A helical transmembrane segment spans residues 23–43 (IVVGLVAFGLLAFVLMKFVFP).

Belongs to the ATPase B chain family. As to quaternary structure, F-type ATPases have 2 components, F(1) - the catalytic core - and F(0) - the membrane proton channel. F(1) has five subunits: alpha(3), beta(3), gamma(1), delta(1), epsilon(1). F(0) has three main subunits: a(1), b(2) and c(10-14). The alpha and beta chains form an alternating ring which encloses part of the gamma chain. F(1) is attached to F(0) by a central stalk formed by the gamma and epsilon chains, while a peripheral stalk is formed by the delta and b chains.

It localises to the cell membrane. Functionally, f(1)F(0) ATP synthase produces ATP from ADP in the presence of a proton or sodium gradient. F-type ATPases consist of two structural domains, F(1) containing the extramembraneous catalytic core and F(0) containing the membrane proton channel, linked together by a central stalk and a peripheral stalk. During catalysis, ATP synthesis in the catalytic domain of F(1) is coupled via a rotary mechanism of the central stalk subunits to proton translocation. Component of the F(0) channel, it forms part of the peripheral stalk, linking F(1) to F(0). The chain is ATP synthase subunit b from Salinispora arenicola (strain CNS-205).